Here is a 442-residue protein sequence, read N- to C-terminus: tRNA modification GTPase MnmE (442 aa).

Residues Arg24, Glu82, and Lys120 each coordinate (6S)-5-formyl-5,6,7,8-tetrahydrofolate. Residues 217 to 367 (GLHIVITGEP…LISLIKKKAE (151 aa)) form the TrmE-type G domain. GTP is bound by residues 227–232 (NVGKST), 246–252 (SEYAGTT), and 271–274 (DTAG). Position 231 (Ser231) interacts with Mg(2+). Ser246 contacts K(+). Thr252 is a binding site for Mg(2+). Lys442 is a binding site for (6S)-5-formyl-5,6,7,8-tetrahydrofolate.

It belongs to the TRAFAC class TrmE-Era-EngA-EngB-Septin-like GTPase superfamily. TrmE GTPase family. In terms of assembly, homodimer. Heterotetramer of two MnmE and two MnmG subunits. It depends on K(+) as a cofactor.

The protein resides in the cytoplasm. Its function is as follows. Exhibits a very high intrinsic GTPase hydrolysis rate. Involved in the addition of a carboxymethylaminomethyl (cmnm) group at the wobble position (U34) of certain tRNAs, forming tRNA-cmnm(5)s(2)U34. The chain is tRNA modification GTPase MnmE from Wolbachia pipientis subsp. Culex pipiens (strain wPip).